A 97-amino-acid polypeptide reads, in one-letter code: MAKTASPGATPPDNGTEPLPDNYEMALAELETLVARMEGGALSLEDSLAAYRRGANLVAFCQQQLEKVEQQVRVLDGATLKPLSSGTAATDGEDDDL.

A disordered region spans residues 1–22 (MAKTASPGATPPDNGTEPLPDN).

It belongs to the XseB family. In terms of assembly, heterooligomer composed of large and small subunits.

It localises to the cytoplasm. The enzyme catalyses Exonucleolytic cleavage in either 5'- to 3'- or 3'- to 5'-direction to yield nucleoside 5'-phosphates.. Bidirectionally degrades single-stranded DNA into large acid-insoluble oligonucleotides, which are then degraded further into small acid-soluble oligonucleotides. This is Exodeoxyribonuclease 7 small subunit from Burkholderia ambifaria (strain MC40-6).